The chain runs to 305 residues: Ribonuclease BN (305 aa).

Residues His64, His66, Asp68, His69, His141, Asp212, and His270 each contribute to the Zn(2+) site. Asp68 (proton acceptor) is an active-site residue.

Belongs to the RNase Z family. RNase BN subfamily. Homodimer. Zn(2+) is required as a cofactor.

In terms of biological role, zinc phosphodiesterase, which has both exoribonuclease and endoribonuclease activities. The polypeptide is Ribonuclease BN (Escherichia coli O45:K1 (strain S88 / ExPEC)).